The chain runs to 195 residues: Putative nucleotidase BH1399 (195 aa).

Belongs to the 5'(3')-deoxyribonucleotidase family.

The chain is Putative nucleotidase BH1399 from Halalkalibacterium halodurans (strain ATCC BAA-125 / DSM 18197 / FERM 7344 / JCM 9153 / C-125) (Bacillus halodurans).